We begin with the raw amino-acid sequence, 207 residues long: Large ribosomal subunit protein uL4 (207 aa).

This sequence belongs to the universal ribosomal protein uL4 family. As to quaternary structure, part of the 50S ribosomal subunit.

Functionally, one of the primary rRNA binding proteins, this protein initially binds near the 5'-end of the 23S rRNA. It is important during the early stages of 50S assembly. It makes multiple contacts with different domains of the 23S rRNA in the assembled 50S subunit and ribosome. Forms part of the polypeptide exit tunnel. This Geobacter sulfurreducens (strain ATCC 51573 / DSM 12127 / PCA) protein is Large ribosomal subunit protein uL4.